Consider the following 576-residue polypeptide: Proline--tRNA ligase (576 aa).

This sequence belongs to the class-II aminoacyl-tRNA synthetase family. ProS type 1 subfamily. As to quaternary structure, homodimer.

The protein localises to the cytoplasm. It catalyses the reaction tRNA(Pro) + L-proline + ATP = L-prolyl-tRNA(Pro) + AMP + diphosphate. In terms of biological role, catalyzes the attachment of proline to tRNA(Pro) in a two-step reaction: proline is first activated by ATP to form Pro-AMP and then transferred to the acceptor end of tRNA(Pro). As ProRS can inadvertently accommodate and process non-cognate amino acids such as alanine and cysteine, to avoid such errors it has two additional distinct editing activities against alanine. One activity is designated as 'pretransfer' editing and involves the tRNA(Pro)-independent hydrolysis of activated Ala-AMP. The other activity is designated 'posttransfer' editing and involves deacylation of mischarged Ala-tRNA(Pro). The misacylated Cys-tRNA(Pro) is not edited by ProRS. The polypeptide is Proline--tRNA ligase (Finegoldia magna (strain ATCC 29328 / DSM 20472 / WAL 2508) (Peptostreptococcus magnus)).